A 134-amino-acid polypeptide reads, in one-letter code: Holo-[acyl-carrier-protein] synthase (134 aa).

2 residues coordinate Mg(2+): aspartate 8 and glutamate 59.

The protein belongs to the P-Pant transferase superfamily. AcpS family. It depends on Mg(2+) as a cofactor.

Its subcellular location is the cytoplasm. It catalyses the reaction apo-[ACP] + CoA = holo-[ACP] + adenosine 3',5'-bisphosphate + H(+). In terms of biological role, transfers the 4'-phosphopantetheine moiety from coenzyme A to a Ser of acyl-carrier-protein. In Zymomonas mobilis subsp. mobilis (strain ATCC 31821 / ZM4 / CP4), this protein is Holo-[acyl-carrier-protein] synthase.